Here is a 180-residue protein sequence, read N- to C-terminus: Regulator of G-protein signaling 8 (180 aa).

Ser26 is subject to Phosphoserine. In terms of domain architecture, RGS spans 56-171 (SFDVLLSHKY…FLRSKMYLDL (116 aa)).

As to quaternary structure, interacts with GNAO1 and GNAI3. In terms of tissue distribution, expressed at high levels in brain. Very little expression detected in other tissues. Detected in Purkinje cells in the cerebellum.

The protein localises to the cell membrane. The protein resides in the membrane. Its subcellular location is the perikaryon. It localises to the cell projection. It is found in the dendrite. The protein localises to the nucleus. Its function is as follows. Regulates G protein-coupled receptor signaling cascades, including signaling via muscarinic acetylcholine receptor CHRM2 and dopamine receptor DRD2. Inhibits signal transduction by increasing the GTPase activity of G protein alpha subunits, thereby driving them into their inactive GDP-bound form. Modulates the activity of potassium channels that are activated in response to DRD2 and CHRM2 signaling. The sequence is that of Regulator of G-protein signaling 8 (Rgs8) from Rattus norvegicus (Rat).